We begin with the raw amino-acid sequence, 1377 residues long: DNA-directed RNA polymerase subunit beta' (1377 aa).

The Zn(2+) site is built by Cys60, Cys62, Cys75, and Cys78. Mg(2+)-binding residues include Asp449, Asp451, and Asp453. Zn(2+) contacts are provided by Cys777, Cys851, Cys858, and Cys861.

The protein belongs to the RNA polymerase beta' chain family. The RNAP catalytic core consists of 2 alpha, 1 beta, 1 beta' and 1 omega subunit. When a sigma factor is associated with the core the holoenzyme is formed, which can initiate transcription. Mg(2+) serves as cofactor. The cofactor is Zn(2+).

The catalysed reaction is RNA(n) + a ribonucleoside 5'-triphosphate = RNA(n+1) + diphosphate. In terms of biological role, DNA-dependent RNA polymerase catalyzes the transcription of DNA into RNA using the four ribonucleoside triphosphates as substrates. In Borrelia recurrentis (strain A1), this protein is DNA-directed RNA polymerase subunit beta'.